The chain runs to 315 residues: Pantothenate kinase (315 aa).

Residue 94–101 coordinates ATP; that stretch reads GSVAVGKS.

This sequence belongs to the prokaryotic pantothenate kinase family.

The protein localises to the cytoplasm. It catalyses the reaction (R)-pantothenate + ATP = (R)-4'-phosphopantothenate + ADP + H(+). The protein operates within cofactor biosynthesis; coenzyme A biosynthesis; CoA from (R)-pantothenate: step 1/5. This is Pantothenate kinase from Shewanella amazonensis (strain ATCC BAA-1098 / SB2B).